The chain runs to 224 residues: MRRDERWDGVYSFEDSPFIMEILTELRDKNTDSIAFRKGLVKLGRYMGYELTKTMDVEEIEVETPLEKTRGILVKDRRNVVIITVLRAAIPLMEGLIKVFEHARVGIVSASRGKAPKFEIEMNYIKIPTVKPDDTVIVADPMIATGSTLIRVLKEVSKYGRPKRLIILGVLAAPEGISRIKEAFPEAEIFVAKVDRELNEKGYILPGLGDAGDRAFGAPLKSPR.

38 to 42 (KGLVK) provides a ligand contact to GTP. Residues arginine 87, arginine 112, and 140–148 (DPMIATGST) each bind 5-phospho-alpha-D-ribose 1-diphosphate. Uracil-binding positions include isoleucine 204 and 209 to 211 (GDA). Residue aspartate 210 coordinates 5-phospho-alpha-D-ribose 1-diphosphate.

The protein belongs to the UPRTase family. Mg(2+) serves as cofactor.

It carries out the reaction UMP + diphosphate = 5-phospho-alpha-D-ribose 1-diphosphate + uracil. It functions in the pathway pyrimidine metabolism; UMP biosynthesis via salvage pathway; UMP from uracil: step 1/1. Allosterically activated by GTP. Its function is as follows. Catalyzes the conversion of uracil and 5-phospho-alpha-D-ribose 1-diphosphate (PRPP) to UMP and diphosphate. The chain is Uracil phosphoribosyltransferase from Thermococcus gammatolerans (strain DSM 15229 / JCM 11827 / EJ3).